The sequence spans 240 residues: MEEKPKYKRILLKLSGEAFAGEQGYGIDPAFLEYISHEIKNVYDLGVQVAIVIGGGNIFRGFQGKEIGVDRATADYMGMLATVINALALQSALENHVNIPTRVLSAIEMRQVAEPYIRRRAIRHLEKGRIVIFAGGTGNPFFSTDTAAALRAAEIGAEVLIKATKVGGIYDKDPEKYPDAVLIKEISYLEVINMGLKVMDHTALTLCKENEIPIIVLNVKEKGNLRRAVLGEEVGSVVRG.

13-16 (KLSG) contributes to the ATP binding site. Positions 21-26 (GEQGYG) are involved in allosteric activation by GTP. Position 55 (glycine 55) interacts with UMP. The ATP site is built by glycine 56 and arginine 60. UMP-binding positions include aspartate 75 and 137 to 144 (TGNPFFST). ATP-binding residues include threonine 164, tyrosine 170, and aspartate 173.

It belongs to the UMP kinase family. Homohexamer.

Its subcellular location is the cytoplasm. It catalyses the reaction UMP + ATP = UDP + ADP. The protein operates within pyrimidine metabolism; CTP biosynthesis via de novo pathway; UDP from UMP (UMPK route): step 1/1. Its activity is regulated as follows. Allosterically activated by GTP. Inhibited by UTP. Catalyzes the reversible phosphorylation of UMP to UDP. The protein is Uridylate kinase of Aquifex aeolicus (strain VF5).